The following is a 151-amino-acid chain: Phospholipase A2 inhibitor BjussuMIP (151 aa).

The signal sequence occupies residues 1–4 (LANG). A C-type lectin domain is found at 31–146 (LKYAFLTVHK…CDENLLVVCE (116 aa)). Disulfide bonds link cysteine 68/cysteine 145 and cysteine 123/cysteine 137. Asparagine 107 carries N-linked (GlcNAc...) asparagine glycosylation.

It belongs to the alpha-type phospholipase A2 inhibitor family. Oligomer. In terms of tissue distribution, expressed by the liver.

It localises to the secreted. Inhibits enzymatic, anticoagulant, edema formation, myotoxicity activities induced by snakes phospholipase A2. Is oligomeric, but it is probable that each of its subunits can bind and inactive a PLA2 molecule. In Bothrops jararacussu (Jararacussu), this protein is Phospholipase A2 inhibitor BjussuMIP.